The chain runs to 360 residues: MADWSTLPVDLLNMIAGRLFSNIELKRFRSICRSWRSSVPGAGKKNPFRTRPLILLNPNPNKPLTDHRRRGEFLSRSAFFRVTLSSSPSQGWLIKSDVDVSSGKLHLLDPLSRLPMEHSRKRVDLSEFTITEIREAYQVHDWRTRKETRPIFKRVALVKDKEGDNQVLGIRSTGKMMYWDIKTWKAKEEGYEFSDIIVHKGQTYALDSIGIVYWIRSDLKFIRFGPLVGDWTGDRRLVECCGEFYIVERLVGESTWKRKADDTGYEYAKTVGFKVYKFDDEQGKMMEVKSLGDKAFVIATDTCFSVLAHEFYGCLENAIYFTDDTMIKVFKLDNGNGSSIETTIYPYAQSCFQMFVPSFL.

An F-box domain is found at 2–50 (ADWSTLPVDLLNMIAGRLFSNIELKRFRSICRSWRSSVPGAGKKNPFRT).

The protein is Putative F-box protein At1g65770 of Arabidopsis thaliana (Mouse-ear cress).